Here is a 100-residue protein sequence, read N- to C-terminus: Integration host factor subunit alpha (100 aa).

This sequence belongs to the bacterial histone-like protein family. Heterodimer of an alpha and a beta chain.

Its function is as follows. This protein is one of the two subunits of integration host factor, a specific DNA-binding protein that functions in genetic recombination as well as in transcriptional and translational control. This chain is Integration host factor subunit alpha, found in Ruegeria sp. (strain TM1040) (Silicibacter sp.).